Reading from the N-terminus, the 150-residue chain is 3-hydroxyacyl-[acyl-carrier-protein] dehydratase FabZ (150 aa).

His54 is a catalytic residue.

It belongs to the thioester dehydratase family. FabZ subfamily.

It localises to the cytoplasm. It carries out the reaction a (3R)-hydroxyacyl-[ACP] = a (2E)-enoyl-[ACP] + H2O. In terms of biological role, involved in unsaturated fatty acids biosynthesis. Catalyzes the dehydration of short chain beta-hydroxyacyl-ACPs and long chain saturated and unsaturated beta-hydroxyacyl-ACPs. The sequence is that of 3-hydroxyacyl-[acyl-carrier-protein] dehydratase FabZ from Aliivibrio fischeri (strain ATCC 700601 / ES114) (Vibrio fischeri).